The following is a 243-amino-acid chain: Ribosomal RNA small subunit methyltransferase E 2 (243 aa).

It belongs to the RNA methyltransferase RsmE family.

Its subcellular location is the cytoplasm. The enzyme catalyses uridine(1498) in 16S rRNA + S-adenosyl-L-methionine = N(3)-methyluridine(1498) in 16S rRNA + S-adenosyl-L-homocysteine + H(+). In terms of biological role, specifically methylates the N3 position of the uracil ring of uridine 1498 (m3U1498) in 16S rRNA. Acts on the fully assembled 30S ribosomal subunit. In Borreliella burgdorferi (strain ATCC 35210 / DSM 4680 / CIP 102532 / B31) (Borrelia burgdorferi), this protein is Ribosomal RNA small subunit methyltransferase E 2 (rsmE2).